The primary structure comprises 351 residues: Nicotinate-nucleotide--dimethylbenzimidazole phosphoribosyltransferase (351 aa).

Catalysis depends on Glu-317, which acts as the Proton acceptor.

The protein belongs to the CobT family.

The catalysed reaction is 5,6-dimethylbenzimidazole + nicotinate beta-D-ribonucleotide = alpha-ribazole 5'-phosphate + nicotinate + H(+). Its pathway is nucleoside biosynthesis; alpha-ribazole biosynthesis; alpha-ribazole from 5,6-dimethylbenzimidazole: step 1/2. Catalyzes the synthesis of alpha-ribazole-5'-phosphate from nicotinate mononucleotide (NAMN) and 5,6-dimethylbenzimidazole (DMB). The polypeptide is Nicotinate-nucleotide--dimethylbenzimidazole phosphoribosyltransferase (Pseudomonas putida (strain ATCC 47054 / DSM 6125 / CFBP 8728 / NCIMB 11950 / KT2440)).